A 345-amino-acid polypeptide reads, in one-letter code: Biotin synthase (345 aa).

The 228-residue stretch at 49–276 (NQVQMSTLLS…ASFVRLSAGR (228 aa)) folds into the Radical SAM core domain. 3 residues coordinate [4Fe-4S] cluster: C64, C68, and C71. [2Fe-2S] cluster contacts are provided by C108, C139, C199, and R271.

This sequence belongs to the radical SAM superfamily. Biotin synthase family. In terms of assembly, homodimer. [4Fe-4S] cluster is required as a cofactor. The cofactor is [2Fe-2S] cluster.

The enzyme catalyses (4R,5S)-dethiobiotin + (sulfur carrier)-SH + 2 reduced [2Fe-2S]-[ferredoxin] + 2 S-adenosyl-L-methionine = (sulfur carrier)-H + biotin + 2 5'-deoxyadenosine + 2 L-methionine + 2 oxidized [2Fe-2S]-[ferredoxin]. It functions in the pathway cofactor biosynthesis; biotin biosynthesis; biotin from 7,8-diaminononanoate: step 2/2. Functionally, catalyzes the conversion of dethiobiotin (DTB) to biotin by the insertion of a sulfur atom into dethiobiotin via a radical-based mechanism. The chain is Biotin synthase from Nitrosococcus oceani (strain ATCC 19707 / BCRC 17464 / JCM 30415 / NCIMB 11848 / C-107).